Reading from the N-terminus, the 153-residue chain is Endoribonuclease YbeY (153 aa).

The Zn(2+) site is built by histidine 113, histidine 117, and histidine 123.

The protein belongs to the endoribonuclease YbeY family. Zn(2+) is required as a cofactor.

Its subcellular location is the cytoplasm. In terms of biological role, single strand-specific metallo-endoribonuclease involved in late-stage 70S ribosome quality control and in maturation of the 3' terminus of the 16S rRNA. The protein is Endoribonuclease YbeY of Aliivibrio fischeri (strain ATCC 700601 / ES114) (Vibrio fischeri).